Here is a 493-residue protein sequence, read N- to C-terminus: 3-octaprenyl-4-hydroxybenzoate carboxy-lyase (493 aa).

Asn-172 is a binding site for Mn(2+). Residues 175-177, 189-191, and 194-195 each bind prenylated FMN; these read IYR, RWL, and RG. Residue Glu-238 coordinates Mn(2+). Catalysis depends on Asp-287, which acts as the Proton donor.

It belongs to the UbiD family. In terms of assembly, homohexamer. Prenylated FMN serves as cofactor. Mn(2+) is required as a cofactor.

The protein resides in the cell membrane. It catalyses the reaction a 4-hydroxy-3-(all-trans-polyprenyl)benzoate + H(+) = a 2-(all-trans-polyprenyl)phenol + CO2. The protein operates within cofactor biosynthesis; ubiquinone biosynthesis. Catalyzes the decarboxylation of 3-octaprenyl-4-hydroxy benzoate to 2-octaprenylphenol, an intermediate step in ubiquinone biosynthesis. The polypeptide is 3-octaprenyl-4-hydroxybenzoate carboxy-lyase (Shewanella piezotolerans (strain WP3 / JCM 13877)).